We begin with the raw amino-acid sequence, 358 residues long: Type II methyltransferase M.HpaII (358 aa).

The 325-residue stretch at 32 to 356 (FTFIDLFAGI…KKILEKLGNL (325 aa)) folds into the SAM-dependent MTase C5-type domain. Cys-103 is a catalytic residue.

Belongs to the class I-like SAM-binding methyltransferase superfamily. C5-methyltransferase family. In terms of assembly, monomer.

It catalyses the reaction a 2'-deoxycytidine in DNA + S-adenosyl-L-methionine = a 5-methyl-2'-deoxycytidine in DNA + S-adenosyl-L-homocysteine + H(+). A methylase that recognizes the double-stranded sequence 5'-CCGG-3', methylates C-2 on both strands, and protects the DNA from cleavage by the HpaII endonuclease. The protein is Type II methyltransferase M.HpaII of Haemophilus parainfluenzae.